A 299-amino-acid polypeptide reads, in one-letter code: GTP cyclohydrolase FolE2 (299 aa).

Belongs to the GTP cyclohydrolase IV family.

The enzyme catalyses GTP + H2O = 7,8-dihydroneopterin 3'-triphosphate + formate + H(+). Its pathway is cofactor biosynthesis; 7,8-dihydroneopterin triphosphate biosynthesis; 7,8-dihydroneopterin triphosphate from GTP: step 1/1. Converts GTP to 7,8-dihydroneopterin triphosphate. The protein is GTP cyclohydrolase FolE2 of Citrobacter koseri (strain ATCC BAA-895 / CDC 4225-83 / SGSC4696).